Here is a 434-residue protein sequence, read N- to C-terminus: Serine hydroxymethyltransferase (434 aa).

(6S)-5,6,7,8-tetrahydrofolate contacts are provided by residues leucine 133 and 137–139 (GHL). At lysine 242 the chain carries N6-(pyridoxal phosphate)lysine.

The protein belongs to the SHMT family. As to quaternary structure, homodimer. Pyridoxal 5'-phosphate is required as a cofactor.

Its subcellular location is the cytoplasm. The catalysed reaction is (6R)-5,10-methylene-5,6,7,8-tetrahydrofolate + glycine + H2O = (6S)-5,6,7,8-tetrahydrofolate + L-serine. It functions in the pathway one-carbon metabolism; tetrahydrofolate interconversion. Its pathway is amino-acid biosynthesis; glycine biosynthesis; glycine from L-serine: step 1/1. Catalyzes the reversible interconversion of serine and glycine with tetrahydrofolate (THF) serving as the one-carbon carrier. This reaction serves as the major source of one-carbon groups required for the biosynthesis of purines, thymidylate, methionine, and other important biomolecules. Also exhibits THF-independent aldolase activity toward beta-hydroxyamino acids, producing glycine and aldehydes, via a retro-aldol mechanism. The polypeptide is Serine hydroxymethyltransferase (Hyphomicrobium methylovorum).